Consider the following 60-residue polypeptide: Large ribosomal subunit protein uL30 (60 aa).

It belongs to the universal ribosomal protein uL30 family. Part of the 50S ribosomal subunit.

This Shewanella woodyi (strain ATCC 51908 / MS32) protein is Large ribosomal subunit protein uL30.